The chain runs to 576 residues: Arginine--tRNA ligase (576 aa).

Residues 126-136 (ANPTGPMHIGH) carry the 'HIGH' region motif.

This sequence belongs to the class-I aminoacyl-tRNA synthetase family. In terms of assembly, monomer.

The protein localises to the cytoplasm. The enzyme catalyses tRNA(Arg) + L-arginine + ATP = L-arginyl-tRNA(Arg) + AMP + diphosphate. The polypeptide is Arginine--tRNA ligase (argS) (Rickettsia prowazekii (strain Madrid E)).